The sequence spans 44 residues: Photosystem I reaction center subunit IX (44 aa).

The chain crosses the membrane as a helical span at residues 7–27; that stretch reads YLSVAPVLTTLWFGSLAGLLI.

Belongs to the PsaJ family.

The protein resides in the plastid. The protein localises to the chloroplast thylakoid membrane. Functionally, may help in the organization of the PsaE and PsaF subunits. The chain is Photosystem I reaction center subunit IX from Liriodendron tulipifera (Tuliptree).